Consider the following 349-residue polypeptide: Sensory histidine kinase/phosphatase NtrB (349 aa).

A PAS domain is found at 5–78 (TQPDAGQILN…SLEAGQGFTD (74 aa)). Residues 136-349 (GLAHEIKNPL…EFSVYLPIRK (214 aa)) enclose the Histidine kinase domain. H139 is subject to Phosphohistidine; by autocatalysis. K329 provides a ligand contact to ATP.

Post-translationally, autophosphorylated.

It localises to the cytoplasm. The enzyme catalyses ATP + protein L-histidine = ADP + protein N-phospho-L-histidine.. Its function is as follows. Member of the two-component regulatory system NtrB/NtrC, which controls expression of the nitrogen-regulated (ntr) genes in response to nitrogen limitation. Under conditions of nitrogen limitation, NtrB autophosphorylates and transfers the phosphoryl group to NtrC. In the presence of nitrogen, acts as a phosphatase that dephosphorylates and inactivates NtrC. This Escherichia coli O157:H7 protein is Sensory histidine kinase/phosphatase NtrB (glnL).